The following is a 330-amino-acid chain: Methionine import ATP-binding protein MetN (330 aa).

One can recognise an ABC transporter domain in the interval 2–241 (IAFRGVSKVY…PSTRLHQLCF (240 aa)). An ATP-binding site is contributed by 38-45 (GQSGAGKS).

It belongs to the ABC transporter superfamily. Methionine importer (TC 3.A.1.24) family. The complex is composed of two ATP-binding proteins (MetN), two transmembrane proteins (MetI) and a solute-binding protein (MetQ).

Its subcellular location is the cell inner membrane. It catalyses the reaction L-methionine(out) + ATP + H2O = L-methionine(in) + ADP + phosphate + H(+). The catalysed reaction is D-methionine(out) + ATP + H2O = D-methionine(in) + ADP + phosphate + H(+). Functionally, part of the ABC transporter complex MetNIQ involved in methionine import. Responsible for energy coupling to the transport system. This chain is Methionine import ATP-binding protein MetN, found in Myxococcus xanthus (strain DK1622).